Reading from the N-terminus, the 100-residue chain is Small ribosomal subunit protein bS6 (100 aa).

This sequence belongs to the bacterial ribosomal protein bS6 family.

Functionally, binds together with bS18 to 16S ribosomal RNA. The polypeptide is Small ribosomal subunit protein bS6 (Tropheryma whipplei (strain Twist) (Whipple's bacillus)).